A 149-amino-acid polypeptide reads, in one-letter code: Large ribosomal subunit protein bL9 (149 aa).

It belongs to the bacterial ribosomal protein bL9 family.

Functionally, binds to the 23S rRNA. The sequence is that of Large ribosomal subunit protein bL9 from Haemophilus influenzae (strain PittEE).